The sequence spans 272 residues: GATA zinc finger domain-containing protein 1 (272 aa).

The GATA-type zinc finger occupies 9–33 (CSVCKTTSSSMWKKGPQGEILCHHC). A disordered region spans residues 67–120 (TFASTSAAPPQSNGGGGGKQSKQEIHRRSARLRNTKYKSAPAAEKKVSTKGKGR). The residue at position 167 (K167) is an N6-acetyllysine. K265 participates in a covalent cross-link: Glycyl lysine isopeptide (Lys-Gly) (interchain with G-Cter in SUMO2).

It localises to the nucleus. This is GATA zinc finger domain-containing protein 1 (GATAD1) from Bos taurus (Bovine).